The sequence spans 175 residues: RNA pyrophosphohydrolase (175 aa).

One can recognise a Nudix hydrolase domain in the interval 6–149 (GYRPNVGIIL…KRQVYQQALT (144 aa)). A Nudix box motif is present at residues 38–59 (GGIKHGESPEQAMYRELYEEVG).

This sequence belongs to the Nudix hydrolase family. RppH subfamily. A divalent metal cation serves as cofactor.

Accelerates the degradation of transcripts by removing pyrophosphate from the 5'-end of triphosphorylated RNA, leading to a more labile monophosphorylated state that can stimulate subsequent ribonuclease cleavage. The polypeptide is RNA pyrophosphohydrolase (Azoarcus sp. (strain BH72)).